A 242-amino-acid chain; its full sequence is Pyridoxine 5'-phosphate synthase (242 aa).

3-amino-2-oxopropyl phosphate is bound at residue Asn-7. 9–10 (DH) is a 1-deoxy-D-xylulose 5-phosphate binding site. Arg-18 is a binding site for 3-amino-2-oxopropyl phosphate. Residue His-43 is the Proton acceptor of the active site. Residues Arg-45 and His-50 each coordinate 1-deoxy-D-xylulose 5-phosphate. The active-site Proton acceptor is Glu-70. Thr-100 provides a ligand contact to 1-deoxy-D-xylulose 5-phosphate. The active-site Proton donor is the His-191. Residues Gly-192 and 213-214 (GH) each bind 3-amino-2-oxopropyl phosphate.

This sequence belongs to the PNP synthase family. In terms of assembly, homooctamer; tetramer of dimers.

It is found in the cytoplasm. The catalysed reaction is 3-amino-2-oxopropyl phosphate + 1-deoxy-D-xylulose 5-phosphate = pyridoxine 5'-phosphate + phosphate + 2 H2O + H(+). It functions in the pathway cofactor biosynthesis; pyridoxine 5'-phosphate biosynthesis; pyridoxine 5'-phosphate from D-erythrose 4-phosphate: step 5/5. Its function is as follows. Catalyzes the complicated ring closure reaction between the two acyclic compounds 1-deoxy-D-xylulose-5-phosphate (DXP) and 3-amino-2-oxopropyl phosphate (1-amino-acetone-3-phosphate or AAP) to form pyridoxine 5'-phosphate (PNP) and inorganic phosphate. This is Pyridoxine 5'-phosphate synthase from Chromobacterium violaceum (strain ATCC 12472 / DSM 30191 / JCM 1249 / CCUG 213 / NBRC 12614 / NCIMB 9131 / NCTC 9757 / MK).